We begin with the raw amino-acid sequence, 199 residues long: Small ribosomal subunit protein eS1 (199 aa).

The protein belongs to the eukaryotic ribosomal protein eS1 family.

In Pyrococcus horikoshii (strain ATCC 700860 / DSM 12428 / JCM 9974 / NBRC 100139 / OT-3), this protein is Small ribosomal subunit protein eS1.